Here is a 719-residue protein sequence, read N- to C-terminus: CRAL-TRIO domain-containing protein T23G5.2 (719 aa).

Residues 2-175 enclose the PRELI/MSF1 domain; the sequence is VQTYRSPVRI…FIEELLKKTT (174 aa). Residues 319-495 form the CRAL-TRIO domain; it reads RPTVIKQYFP…FLGGSCLTTN (177 aa). One can recognise a GOLD domain in the interval 524 to 681; that stretch reads HSTYTSTATW…KCRLIYYYEI (158 aa). Positions 700–719 are disordered; sequence SSFSSIAPPTPPTPGTPRNP. Residues 707 to 719 are compositionally biased toward pro residues; it reads PPTPPTPGTPRNP.

This chain is CRAL-TRIO domain-containing protein T23G5.2, found in Caenorhabditis elegans.